A 140-amino-acid polypeptide reads, in one-letter code: Ribosome-binding factor A (140 aa).

Positions 121 to 140 (KTEQTSADDDADRLDSEDRS) are disordered.

This sequence belongs to the RbfA family. In terms of assembly, monomer. Binds 30S ribosomal subunits, but not 50S ribosomal subunits or 70S ribosomes.

Its subcellular location is the cytoplasm. Functionally, one of several proteins that assist in the late maturation steps of the functional core of the 30S ribosomal subunit. Associates with free 30S ribosomal subunits (but not with 30S subunits that are part of 70S ribosomes or polysomes). Required for efficient processing of 16S rRNA. May interact with the 5'-terminal helix region of 16S rRNA. The sequence is that of Ribosome-binding factor A from Psychrobacter sp. (strain PRwf-1).